A 62-amino-acid chain; its full sequence is Alpha-lytic protease L1 (62 aa).

Serine 48 (charge relay system) is an active-site residue.

The protein belongs to the peptidase S1 family. As to quaternary structure, monomer.

It localises to the secreted. It catalyses the reaction Preferential cleavage: Ala-|-Xaa, Val-|-Xaa in bacterial cell walls, elastin and other proteins.. Its activity is regulated as follows. Inhibited by phenylmethanesulfonyl fluoride (PMSF) and p-chloromercuribenzoate (PCMB). Functionally, has bacteriolytic activity. This chain is Alpha-lytic protease L1, found in Lysobacter sp. (strain XL1).